The sequence spans 342 residues: MAPTLELLAEDYASEEDSDFAPETAEAAGESSISDDDDEEAGEDAEKAKPEKRKRAAIEEAEDAGYDNSGDEAIIKKGEKRQKKTKTKLAADDEETGEGGLIKTRSQRAVEKEKRSTAAASGPVTIDVDALWAQMISEPVIPRTSTAKPDESADPANCDIAKSSSQQPETAKAKDPDSDLIKIKRTYNFAGKVHTEEKLVARDSAEAKLYLASLGENAPADGETAAEDESSSAKRMPRKAFRSVFEPITDANSAHRSDLNLSMASRLQAREATGNKAKKLNTVEKSKMDWAVAVDKMGLKDELELAGKSKDSFAARQDFLARSEMRREEEARRARMAQAGKT.

Disordered regions lie at residues 1 to 126 (MAPT…PVTI), 142 to 178 (PRTS…DPDS), and 214 to 238 (LGEN…RMPR). 2 stretches are compositionally biased toward acidic residues: residues 8–20 (LAED…DSDF) and 33–43 (ISDDDDEEAGE). The segment covering 78–87 (GEKRQKKTKT) has biased composition (basic residues). The BCNT-C domain occupies 260–341 (NLSMASRLQA…RRARMAQAGK (82 aa)).

The protein belongs to the SWC5 family. In terms of assembly, component of the SWR1 chromatin remodeling complex.

It is found in the nucleus. Its function is as follows. Component of the SWR1 complex which mediates the ATP-dependent exchange of histone H2A for the H2A variant H2A.Z leading to transcriptional regulation of selected genes by chromatin remodeling. Involved in chromosome stability. The polypeptide is SWR1-complex protein 5 (crc-2) (Neurospora crassa (strain ATCC 24698 / 74-OR23-1A / CBS 708.71 / DSM 1257 / FGSC 987)).